A 595-amino-acid chain; its full sequence is Beta-(1--&gt;2)glucan export ATP-binding/permease protein NdvA (595 aa).

Helical transmembrane passes span 21–41 (FLLI…EPIL), 56–76 (LVTL…YVLV), 129–149 (IWLE…VLVP), 158–178 (LSIV…LVMQ), and 252–272 (ISIV…QLSV). The ABC transmembrane type-1 domain occupies 21 to 301 (FLLICTANIT…ISGFINLAVS (281 aa)). Residues 335 to 569 (IQFHHVTYEF…DGHFYKLLKR (235 aa)) enclose the ABC transporter domain. 368-375 (GPTGAGKT) provides a ligand contact to ATP.

The protein belongs to the ABC transporter superfamily. Beta-(1--&gt;2)glucan exporter (TC 3.A.1.108.1) family. Homodimer.

Its subcellular location is the cell inner membrane. It catalyses the reaction [(1-&gt;2)-beta-D-glucosyl](n)(in) + ATP + H2O = [(1-&gt;2)-beta-D-glucosyl](n)(out) + ADP + phosphate + H(+). Functionally, involved in beta-(1--&gt;2)glucan export. Transmembrane domains (TMD) form a pore in the inner membrane and the ATP-binding domain (NBD) is responsible for energy generation. The sequence is that of Beta-(1--&gt;2)glucan export ATP-binding/permease protein NdvA from Bartonella bacilliformis.